The following is a 35-amino-acid chain: Photosystem II reaction center protein T (35 aa).

A helical membrane pass occupies residues A3–F23.

Belongs to the PsbT family. PSII is composed of 1 copy each of membrane proteins PsbA, PsbB, PsbC, PsbD, PsbE, PsbF, PsbH, PsbI, PsbJ, PsbK, PsbL, PsbM, PsbT, PsbY, PsbZ, Psb30/Ycf12, at least 3 peripheral proteins of the oxygen-evolving complex and a large number of cofactors. It forms dimeric complexes.

Its subcellular location is the plastid. It is found in the chloroplast thylakoid membrane. Its function is as follows. Found at the monomer-monomer interface of the photosystem II (PS II) dimer, plays a role in assembly and dimerization of PSII. PSII is a light-driven water plastoquinone oxidoreductase, using light energy to abstract electrons from H(2)O, generating a proton gradient subsequently used for ATP formation. This chain is Photosystem II reaction center protein T, found in Coleochaete orbicularis (Charophycean green alga).